A 732-amino-acid polypeptide reads, in one-letter code: Catalase-peroxidase (732 aa).

Residues Trp97 to Tyr220 constitute a cross-link (tryptophyl-tyrosyl-methioninium (Trp-Tyr) (with M-246)). His98 serves as the catalytic Proton acceptor. Positions Tyr220–Met246 form a cross-link, tryptophyl-tyrosyl-methioninium (Tyr-Met) (with W-97). His261 serves as a coordination point for heme b.

Belongs to the peroxidase family. Peroxidase/catalase subfamily. In terms of assembly, homodimer or homotetramer. It depends on heme b as a cofactor. In terms of processing, formation of the three residue Trp-Tyr-Met cross-link is important for the catalase, but not the peroxidase activity of the enzyme.

It catalyses the reaction H2O2 + AH2 = A + 2 H2O. It carries out the reaction 2 H2O2 = O2 + 2 H2O. Functionally, bifunctional enzyme with both catalase and broad-spectrum peroxidase activity. This chain is Catalase-peroxidase, found in Chlorobium phaeobacteroides (strain DSM 266 / SMG 266 / 2430).